The primary structure comprises 310 residues: Tagatose-6-phosphate kinase (310 aa).

This sequence belongs to the carbohydrate kinase PfkB family. LacC subfamily.

It catalyses the reaction D-tagatofuranose 6-phosphate + ATP = D-tagatofuranose 1,6-bisphosphate + ADP + H(+). The protein operates within carbohydrate metabolism; D-tagatose 6-phosphate degradation; D-glyceraldehyde 3-phosphate and glycerone phosphate from D-tagatose 6-phosphate: step 1/2. The polypeptide is Tagatose-6-phosphate kinase (Staphylococcus aureus (strain bovine RF122 / ET3-1)).